Consider the following 642-residue polypeptide: Sodium- and chloride-dependent neutral and basic amino acid transporter B(0+) (642 aa).

Topologically, residues 1–44 (MDKLKCPSFFKCREKEKVSASSENFHVGENDENQDRGNWSKKSD) are cytoplasmic. 3 helical membrane passes run 45–65 (YLLS…FPYL), 72–92 (GAFL…LFFL), and 110–130 (ILPL…FVTI). At 131-234 (YYNVIIAYSL…RSSGMNETGV (104 aa)) the chain is on the extracellular side. N-linked (GlcNAc...) asparagine glycans are attached at residues asparagine 155, asparagine 163, asparagine 174, asparagine 189, asparagine 197, asparagine 202, and asparagine 230. 2 consecutive transmembrane segments (helical) span residues 235–255 (IVWY…AALF) and 261–281 (SGKV…ILLV). N-linked (GlcNAc...) asparagine glycosylation is present at asparagine 302. The next 7 membrane-spanning stretches (helical) occupy residues 315-335 (AATQ…ALSS), 348-368 (IVVC…IFSI), 399-419 (LAQL…LLTL), 450-477 (ITLG…VHLI), 480-500 (FCAG…IIWI), 528-548 (CWFV…LVQF), and 563-583 (VALG…MAII). Over 584–642 (KIIQAKGNIFQRLISCCRPASNWGPYLEQHRGERYKDMVDPKKEADHEIPTVSGSRKPE) the chain is Cytoplasmic. A compositionally biased stretch (basic and acidic residues) spans 622–632 (VDPKKEADHEI). Residues 622 to 642 (VDPKKEADHEIPTVSGSRKPE) are disordered.

This sequence belongs to the sodium:neurotransmitter symporter (SNF) (TC 2.A.22) family. SLC6A14 subfamily. In terms of tissue distribution, levels are highest in adult and fetal lung, in trachea and salivary gland. Lower levels detected in mammary gland, stomach and pituitary gland, and very low levels in colon, uterus, prostate and testis.

It is found in the membrane. Its subcellular location is the apical cell membrane. The catalysed reaction is glycine(out) + chloride(out) + 2 Na(+)(out) = glycine(in) + chloride(in) + 2 Na(+)(in). The enzyme catalyses L-leucine(out) + chloride(out) + 2 Na(+)(out) = L-leucine(in) + chloride(in) + 2 Na(+)(in). It catalyses the reaction L-glutamine(out) + chloride(out) + 2 Na(+)(out) = L-glutamine(in) + chloride(in) + 2 Na(+)(in). It carries out the reaction L-arginine(out) + chloride(out) + 2 Na(+)(out) = L-arginine(in) + chloride(in) + 2 Na(+)(in). The catalysed reaction is (R)-carnitine(out) + chloride(out) + 2 Na(+)(out) = (R)-carnitine(in) + chloride(in) + 2 Na(+)(in). The enzyme catalyses O-butanoyl-(R)-carnitine(out) + chloride(out) + 2 Na(+)(out) = O-butanoyl-(R)-carnitine(in) + chloride(in) + 2 Na(+)(in). It catalyses the reaction O-propanoyl-(R)-carnitine(out) + chloride(out) + 2 Na(+)(out) = O-propanoyl-(R)-carnitine(in) + chloride(in) + 2 Na(+)(in). It carries out the reaction L-isoleucine(out) + chloride(out) + 2 Na(+)(out) = L-isoleucine(in) + chloride(in) + 2 Na(+)(in). The catalysed reaction is L-methionine(out) + chloride(out) + 2 Na(+)(out) = L-methionine(in) + chloride(in) + 2 Na(+)(in). The enzyme catalyses L-valine(out) + chloride(out) + 2 Na(+)(out) = L-valine(in) + chloride(in) + 2 Na(+)(in). It catalyses the reaction L-alanine(out) + chloride(out) + 2 Na(+)(out) = L-alanine(in) + chloride(in) + 2 Na(+)(in). It carries out the reaction L-serine(out) + chloride(out) + 2 Na(+)(out) = L-serine(in) + chloride(in) + 2 Na(+)(in). The catalysed reaction is L-cysteine(out) + chloride(out) + 2 Na(+)(out) = L-cysteine(in) + chloride(in) + 2 Na(+)(in). The enzyme catalyses L-asparagine(out) + chloride(out) + 2 Na(+)(out) = L-asparagine(in) + chloride(in) + 2 Na(+)(in). It catalyses the reaction L-threonine(out) + chloride(out) + 2 Na(+)(out) = L-threonine(in) + chloride(in) + 2 Na(+)(in). It carries out the reaction L-phenylalanine(out) + chloride(out) + 2 Na(+)(out) = L-phenylalanine(in) + chloride(in) + 2 Na(+)(in). The catalysed reaction is L-tryptophan(out) + chloride(out) + 2 Na(+)(out) = L-tryptophan(in) + chloride(in) + 2 Na(+)(in). The enzyme catalyses L-tyrosine(out) + chloride(out) + 2 Na(+)(out) = L-tyrosine(in) + chloride(in) + 2 Na(+)(in). It catalyses the reaction L-histidine(out) + chloride(out) + 2 Na(+)(out) = L-histidine(in) + chloride(in) + 2 Na(+)(in). It carries out the reaction L-lysine(out) + chloride(out) + 2 Na(+)(out) = L-lysine(in) + chloride(in) + 2 Na(+)(in). The catalysed reaction is beta-alanine(out) + chloride(out) + 2 Na(+)(out) = beta-alanine(in) + chloride(in) + 2 Na(+)(in). In terms of biological role, amino acid transporter that plays an important role in the absorption of amino acids in the intestinal tract. Mediates the uptake of a broad range of neutral and cationic amino acids (with the exception of proline) in a Na(+)/Cl(-)-dependent manner. Transports non-alpha-amino acids such as beta-alanine with low affinity, and has a higher affinity for dipolar and cationic amino acids such as leucine and lysine. Can also transport carnitine, butirylcarnitine and propionylcarnitine coupled to the transmembrane gradients of Na(+) and Cl(-). This is Sodium- and chloride-dependent neutral and basic amino acid transporter B(0+) from Homo sapiens (Human).